A 215-amino-acid polypeptide reads, in one-letter code: uncharacterized protein (215 aa).

Catalysis depends on charge relay system residues Ser114, Asp162, and His194.

It belongs to the AB hydrolase superfamily. AB hydrolase 2 family.

This is an uncharacterized protein from Rickettsia typhi (strain ATCC VR-144 / Wilmington).